Consider the following 465-residue polypeptide: Adenosylhomocysteinase (465 aa).

Substrate contacts are provided by threonine 56, aspartate 131, and glutamate 191. NAD(+) is bound at residue 192-194; that stretch reads TTT. Residues lysine 221 and aspartate 225 each contribute to the substrate site. Residues asparagine 226, 255–260, glutamate 278, asparagine 313, 334–336, and asparagine 379 each bind NAD(+); these read GYGDVG and IGH.

Belongs to the adenosylhomocysteinase family. The cofactor is NAD(+).

It localises to the cytoplasm. It carries out the reaction S-adenosyl-L-homocysteine + H2O = L-homocysteine + adenosine. It functions in the pathway amino-acid biosynthesis; L-homocysteine biosynthesis; L-homocysteine from S-adenosyl-L-homocysteine: step 1/1. In terms of biological role, may play a key role in the regulation of the intracellular concentration of adenosylhomocysteine. The protein is Adenosylhomocysteinase of Bartonella tribocorum (strain CIP 105476 / IBS 506).